The chain runs to 412 residues: MKPINVGLLGIGTVGGGTYTVLTRNQEEIARRAGRPIAITRVADRNLELARQVTGGKIDVTDDAFAIVSDPAIDIVVELIGGYTVARELVLKAIENGKHVVTANKALIACMAMKFLPLRRKKASSSLLKLPLLVVSPLFKAVREGLAANRIEWIAGIINGTTNFILSEMREKGLAFADVLKEAQRLGYAEADPTFDVEGIDAAHKLMILAAMLWLFVHSLCRGITKLDAVDITKRTDKGVELRVHPTLIPEKRLICQCEWRNECCAGQGRCCWPTLYYGAGAGAEPTASAVADLVDGTDRGISCPHLAFQPDRLVDLPILPIGEISSAYYLRLRAVDKPGVLADVTRILGDRQISIDAMIQKEPQEGEDQADIIILTHVTVEKNMDDAIAAIEALPAISGKVTRLRMEELSR.

Residues 9-16 (LGIGTVGG) and Lys105 each bind NADP(+). Residue Glu190 participates in substrate binding. The Proton donor role is filled by Lys205. The region spanning 330–407 (YLRLRAVDKP…ISGKVTRLRM (78 aa)) is the ACT domain.

It belongs to the homoserine dehydrogenase family.

The catalysed reaction is L-homoserine + NADP(+) = L-aspartate 4-semialdehyde + NADPH + H(+). It catalyses the reaction L-homoserine + NAD(+) = L-aspartate 4-semialdehyde + NADH + H(+). It functions in the pathway amino-acid biosynthesis; L-methionine biosynthesis via de novo pathway; L-homoserine from L-aspartate: step 3/3. Its pathway is amino-acid biosynthesis; L-threonine biosynthesis; L-threonine from L-aspartate: step 3/5. The protein is Homoserine dehydrogenase (hom) of Methylobacillus glycogenes.